The sequence spans 389 residues: Formate-dependent phosphoribosylglycinamide formyltransferase (389 aa).

Residues 15-16 and E75 contribute to the N(1)-(5-phospho-beta-D-ribosyl)glycinamide site; that span reads EL. Residues R107, K148, 153–158, 188–191, and E196 each bind ATP; these read SSGKGQ and EEFL. The region spanning 112–302 is the ATP-grasp domain; it reads DLAAGELALR…EFELHLRAVL (191 aa). Mg(2+)-binding residues include E261 and E273. N(1)-(5-phospho-beta-D-ribosyl)glycinamide is bound by residues D280, K350, and 357–358; that span reads RR.

Belongs to the PurK/PurT family. Homodimer.

It catalyses the reaction N(1)-(5-phospho-beta-D-ribosyl)glycinamide + formate + ATP = N(2)-formyl-N(1)-(5-phospho-beta-D-ribosyl)glycinamide + ADP + phosphate + H(+). It participates in purine metabolism; IMP biosynthesis via de novo pathway; N(2)-formyl-N(1)-(5-phospho-D-ribosyl)glycinamide from N(1)-(5-phospho-D-ribosyl)glycinamide (formate route): step 1/1. In terms of biological role, involved in the de novo purine biosynthesis. Catalyzes the transfer of formate to 5-phospho-ribosyl-glycinamide (GAR), producing 5-phospho-ribosyl-N-formylglycinamide (FGAR). Formate is provided by PurU via hydrolysis of 10-formyl-tetrahydrofolate. The protein is Formate-dependent phosphoribosylglycinamide formyltransferase of Synechococcus sp. (strain WH7803).